We begin with the raw amino-acid sequence, 354 residues long: Uroporphyrinogen decarboxylase (354 aa).

Substrate contacts are provided by residues 27-31 (RQAGR), Asp-77, Tyr-154, Ser-209, and His-327.

Belongs to the uroporphyrinogen decarboxylase family. In terms of assembly, homodimer.

It localises to the cytoplasm. It carries out the reaction uroporphyrinogen III + 4 H(+) = coproporphyrinogen III + 4 CO2. It functions in the pathway porphyrin-containing compound metabolism; protoporphyrin-IX biosynthesis; coproporphyrinogen-III from 5-aminolevulinate: step 4/4. Catalyzes the decarboxylation of four acetate groups of uroporphyrinogen-III to yield coproporphyrinogen-III. The polypeptide is Uroporphyrinogen decarboxylase (Saccharophagus degradans (strain 2-40 / ATCC 43961 / DSM 17024)).